Consider the following 397-residue polypeptide: Elongation factor Tu (397 aa).

The 198-residue stretch at 10-207 (KPHVNIGTIG…AVDESIPEPV (198 aa)) folds into the tr-type G domain. Residues 19 to 26 (GHVDHGKT) are G1. 19–26 (GHVDHGKT) contributes to the GTP binding site. Threonine 26 provides a ligand contact to Mg(2+). The segment at 63 to 67 (GITIN) is G2. A G3 region spans residues 84 to 87 (DAPG). GTP-binding positions include 84–88 (DAPGH) and 139–142 (NKSD). The G4 stretch occupies residues 139-142 (NKSD). The segment at 177–179 (SGL) is G5.

Belongs to the TRAFAC class translation factor GTPase superfamily. Classic translation factor GTPase family. EF-Tu/EF-1A subfamily. Monomer.

It is found in the cytoplasm. It carries out the reaction GTP + H2O = GDP + phosphate + H(+). Functionally, GTP hydrolase that promotes the GTP-dependent binding of aminoacyl-tRNA to the A-site of ribosomes during protein biosynthesis. The sequence is that of Elongation factor Tu from Clavibacter sepedonicus (Clavibacter michiganensis subsp. sepedonicus).